A 56-amino-acid chain; its full sequence is Small ribosomal subunit protein uS14 (56 aa).

Zn(2+) contacts are provided by C21, C24, C39, and C42.

It belongs to the universal ribosomal protein uS14 family. Zinc-binding uS14 subfamily. As to quaternary structure, part of the 30S ribosomal subunit. Requires Zn(2+) as cofactor.

Functionally, binds 16S rRNA, required for the assembly of 30S particles. The chain is Small ribosomal subunit protein uS14 from Thermococcus kodakarensis (strain ATCC BAA-918 / JCM 12380 / KOD1) (Pyrococcus kodakaraensis (strain KOD1)).